The chain runs to 202 residues: Securin-2 (202 aa).

The disordered stretch occupies residues 60–105; the sequence is TRKALGTVNRATEKSVKTNGPRKQKQPSFSAKKMTEKTVKTKSSVP. The short motif at 61–64 is the D-box element; that stretch reads RKAL. The SH3-binding motif lies at 163–173; that stretch reads PPSPVKMPSPP.

This sequence belongs to the securin family. Expressed at low levels in the pituitary, liver, spleen, prostate, testis, ovary, small intestine and colon. Also expressed in various pituitary, testicular, liver and ovarian tumors.

It is found in the cytoplasm. It localises to the nucleus. This Homo sapiens (Human) protein is Securin-2 (PTTG2).